The chain runs to 347 residues: Phosphoribosylformylglycinamidine cyclo-ligase (347 aa).

This sequence belongs to the AIR synthase family.

The protein localises to the cytoplasm. It carries out the reaction 2-formamido-N(1)-(5-O-phospho-beta-D-ribosyl)acetamidine + ATP = 5-amino-1-(5-phospho-beta-D-ribosyl)imidazole + ADP + phosphate + H(+). It functions in the pathway purine metabolism; IMP biosynthesis via de novo pathway; 5-amino-1-(5-phospho-D-ribosyl)imidazole from N(2)-formyl-N(1)-(5-phospho-D-ribosyl)glycinamide: step 2/2. This is Phosphoribosylformylglycinamidine cyclo-ligase from Desulfatibacillum aliphaticivorans.